A 362-amino-acid chain; its full sequence is Salactin (362 aa).

A compositionally biased stretch (acidic residues) spans 1–10 (MSDDTEDDSG). The interval 1–28 (MSDDTEDDSGGESTADMEFGEQPAPLGV) is disordered.

As to quaternary structure, forms dynamically unstable filaments. Monomers are added at the growing filament end. In vitro, salactin polymerizes in the presence of ATP and AMP-PNP but not in the presence of ADP, GTP, ATPgammaS or buffer alone.

It is found in the cytoplasm. Functionally, actin homolog which might be involved in partitioning DNA between daughter cells when chromosomal copy number is low. The chain is Salactin from Halobacterium salinarum (strain ATCC 700922 / JCM 11081 / NRC-1) (Halobacterium halobium).